The following is a 331-amino-acid chain: MKRLVCVLLVCSSAVAQLHKDPTLDHHWHLWKKTYGKQYKEKNEEAVRRLIWEKNLKFVMLHNLEHSMGMHSYDLGMNHLGDMTSEEVMSLMSSLRVPSQWQRNITYKSNPNRILPDSVDWREKGCVTEVKYQGSCGACWAFSAVGALEAQLKLKTGKLVSLSAQNLVDCSTEKYGNKGCNGGFMTTAFQYIIDNKGIDSDASYPYKAMDQKCQYDSKYRAATCSKYTELPYGREDVLKEAVANKGPVSVGVDARHPSFFLYRSGVYYEPSCTQNVNHGVLVVGYGDLNGKEYWLVKNSWGHNFGEEGYIRMARNKGNHCGIASFPSYPEI.

Positions 1 to 16 are cleaved as a signal peptide; it reads MKRLVCVLLVCSSAVA. Residues 17–114 constitute a propeptide, activation peptide; the sequence is QLHKDPTLDH…ITYKSNPNRI (98 aa). N-linked (GlcNAc...) asparagine glycosylation occurs at Asn-104. 4 disulfide bridges follow: Cys-126/Cys-224, Cys-136/Cys-180, Cys-170/Cys-213, and Cys-272/Cys-320. Cys-139 is an active-site residue. Residues His-278 and Asn-298 contribute to the active site.

Belongs to the peptidase C1 family. Monomer.

The protein localises to the lysosome. Its subcellular location is the secreted. It is found in the cytoplasmic vesicle. The protein resides in the phagosome. The catalysed reaction is Similar to cathepsin L, but with much less activity on Z-Phe-Arg-|-NHMec, and more activity on the Z-Val-Val-Arg-|-Xaa compound.. Its function is as follows. Thiol protease. Key protease responsible for the removal of the invariant chain from MHC class II molecules and MHC class II antigen presentation. The bond-specificity of this proteinase is in part similar to the specificities of cathepsin L. This Homo sapiens (Human) protein is Cathepsin S (CTSS).